A 377-amino-acid chain; its full sequence is Chorismate synthase (377 aa).

Arginine 47 is a binding site for NADP(+). FMN is bound by residues 124–126, 252–253, glycine 296, 311–315, and arginine 338; these read RSS, NS, and KPTPS.

The protein belongs to the chorismate synthase family. FMNH2 is required as a cofactor.

It catalyses the reaction 5-O-(1-carboxyvinyl)-3-phosphoshikimate = chorismate + phosphate. It functions in the pathway metabolic intermediate biosynthesis; chorismate biosynthesis; chorismate from D-erythrose 4-phosphate and phosphoenolpyruvate: step 7/7. Catalyzes the anti-1,4-elimination of the C-3 phosphate and the C-6 proR hydrogen from 5-enolpyruvylshikimate-3-phosphate (EPSP) to yield chorismate, which is the branch point compound that serves as the starting substrate for the three terminal pathways of aromatic amino acid biosynthesis. This reaction introduces a second double bond into the aromatic ring system. In Methanococcus vannielii (strain ATCC 35089 / DSM 1224 / JCM 13029 / OCM 148 / SB), this protein is Chorismate synthase.